The chain runs to 367 residues: MSSPPPARKGFYRQEVTKTAWEVRAVYQDLQPVGSGAYGAVCSAVDSRTGNKVAIKKLYRPFQSELFAKRAYRELRLLKHMRHENVIGLLDVFTPDETLDDFTDFYLVMPFMGTDLGKLMKHETLSEDRIQFLVYQMLKGLKYIHAAGVIHRDLKPGNLAVNEDCELKILDFGLARQADSEMTGYVVTRWYRAPEVILNWMRYTQTVDIWSVGCIMAEMITGKILFKGNDHLDQLKEIMKVTGTPPPEFVQKLQSAEAKNYMEGLPELEKKDFASVLTNASPQAVNLLEKMLVLDAEQRVTAAEALAHPYFESLRDTEDEPKAQKYDDSFDDVDRTLEEWKRVTYKEVLSFKPPRQLGARVPKETAL.

Residues 27 to 311 (YQDLQPVGSG…AAEALAHPYF (285 aa)) form the Protein kinase domain. Residues 33–41 (VGSGAYGAV) and lysine 56 each bind ATP. Aspartate 153 functions as the Proton acceptor in the catalytic mechanism. A Phosphothreonine; by MAP2K3 and MAP2K6 modification is found at threonine 183. The short motif at 183–185 (TGY) is the TXY element. Tyrosine 185 carries the post-translational modification Phosphotyrosine; by MAP2K3 and MAP2K6.

Belongs to the protein kinase superfamily. CMGC Ser/Thr protein kinase family. MAP kinase subfamily. Monomer. Interacts with the PDZ domain of the syntrophin SNTA1. Interacts with LIN7C, SCRIB, SYNJ2BP and SH3BP5. Interacts with PTPN4; this interaction induces the activation of PTPN4 phosphatase activity. The cofactor is Mg(2+). Post-translationally, dually phosphorylated on Thr-183 and Tyr-185 by MAP2K3/MKK3 and MAP2K6/MKK6, which activates the enzyme. In terms of processing, ubiquitinated. Ubiquitination leads to degradation by the proteasome pathway. In terms of tissue distribution, highly expressed in skeletal muscle, lung and testes and also in the heart and thymus of both adult and neonatal rats.

It localises to the cytoplasm. The protein localises to the nucleus. It is found in the mitochondrion. It carries out the reaction L-seryl-[protein] + ATP = O-phospho-L-seryl-[protein] + ADP + H(+). The enzyme catalyses L-threonyl-[protein] + ATP = O-phospho-L-threonyl-[protein] + ADP + H(+). Its activity is regulated as follows. Activated by phosphorylation on threonine and tyrosine. MAP2K3/MKK3 and MAP2K6/MKK6 are both essential for the activation of MAPK12 induced by environmental stress, whereas MAP2K6/MKK6 is the major MAPK12 activator in response to TNF-alpha. Serine/threonine kinase which acts as an essential component of the MAP kinase signal transduction pathway. MAPK12 is one of the four p38 MAPKs which play an important role in the cascades of cellular responses evoked by extracellular stimuli such as pro-inflammatory cytokines or physical stress leading to direct activation of transcription factors such as ELK1 and ATF2. Accordingly, p38 MAPKs phosphorylate a broad range of proteins and it has been estimated that they may have approximately 200 to 300 substrates each. Some of the targets are downstream kinases such as MAPKAPK2, which are activated through phosphorylation and further phosphorylate additional targets. Plays a role in myoblast differentiation and also in the down-regulation of cyclin D1 in response to hypoxia in adrenal cells suggesting MAPK12 may inhibit cell proliferation while promoting differentiation. Phosphorylates DLG1. Following osmotic shock, MAPK12 in the cell nucleus increases its association with nuclear DLG1, thereby causing dissociation of DLG1-SFPQ complexes. This function is independent of its catalytic activity and could affect mRNA processing and/or gene transcription to aid cell adaptation to osmolarity changes in the environment. Regulates UV-induced checkpoint signaling and repair of UV-induced DNA damage and G2 arrest after gamma-radiation exposure. MAPK12 is involved in the regulation of SLC2A1 expression and basal glucose uptake in L6 myotubes; and negatively regulates SLC2A4 expression and contraction-mediated glucose uptake in adult skeletal muscle. C-Jun (JUN) phosphorylation is stimulated by MAPK14 and inhibited by MAPK12, leading to a distinct AP-1 regulation. MAPK12 is required for the normal kinetochore localization of PLK1, prevents chromosomal instability and supports mitotic cell viability. MAPK12-signaling is also positively regulating the expansion of transient amplifying myogenic precursor cells during muscle growth and regeneration. In Rattus norvegicus (Rat), this protein is Mitogen-activated protein kinase 12 (Mapk12).